Reading from the N-terminus, the 97-residue chain is Protein RnfH (97 aa).

Belongs to the UPF0125 (RnfH) family.

The chain is Protein RnfH from Halorhodospira halophila (strain DSM 244 / SL1) (Ectothiorhodospira halophila (strain DSM 244 / SL1)).